We begin with the raw amino-acid sequence, 306 residues long: MVVRPHLHWFRMLLAWRGSVLPQLLPRLFLIFCISLVAMAVHVHWLPITVNLSTTPFSLIGIALAVFLGFRNNASYDRYWEARKLWGQLLNDARSMTRQALTLPRETLAAADVREFVQVLGALPHALRHQLRRTDPRDDLSARLPAPLFERVMASRYRPAALMLWLGEWVRQRSREGSLDAWAVLAFDRNLGSLSNVIGGCERIVSTPLPFAYSVMIHRTVYFFCAALPFGLVESIGNFTPVFSVFVAYAFMAHEAIAAQIEEPFGTEDNDLALNTMSLMIEDAVRDLIGEPSLGDEAAARAFILD.

The next 4 helical transmembrane spans lie at L28 to I48, V50 to F70, Y213 to V233, and F239 to A259.

It belongs to the anion channel-forming bestrophin (TC 1.A.46) family.

It localises to the cell membrane. This chain is Voltage-dependent anion channel-forming protein RSc3414, found in Ralstonia nicotianae (strain ATCC BAA-1114 / GMI1000) (Ralstonia solanacearum).